The following is a 476-amino-acid chain: Cysteine--tRNA ligase (476 aa).

A Zn(2+)-binding site is contributed by Cys29. Positions Pro31–His41 match the 'HIGH' region motif. The Zn(2+) site is built by Cys209, His234, and Glu238. The short motif at Lys266–Ser270 is the 'KMSKS' region element. An ATP-binding site is contributed by Lys269.

The protein belongs to the class-I aminoacyl-tRNA synthetase family. Zn(2+) serves as cofactor.

The protein localises to the cytoplasm. It catalyses the reaction tRNA(Cys) + L-cysteine + ATP = L-cysteinyl-tRNA(Cys) + AMP + diphosphate. This is Cysteine--tRNA ligase from Thermococcus gammatolerans (strain DSM 15229 / JCM 11827 / EJ3).